The following is a 123-amino-acid chain: UPF0102 protein CLJ_B2665 (123 aa).

This sequence belongs to the UPF0102 family.

This Clostridium botulinum (strain 657 / Type Ba4) protein is UPF0102 protein CLJ_B2665.